The chain runs to 469 residues: 3-isopropylmalate dehydratase large subunit (469 aa).

Positions 347, 407, and 410 each coordinate [4Fe-4S] cluster.

Belongs to the aconitase/IPM isomerase family. LeuC type 1 subfamily. As to quaternary structure, heterodimer of LeuC and LeuD. [4Fe-4S] cluster serves as cofactor.

It catalyses the reaction (2R,3S)-3-isopropylmalate = (2S)-2-isopropylmalate. Its pathway is amino-acid biosynthesis; L-leucine biosynthesis; L-leucine from 3-methyl-2-oxobutanoate: step 2/4. Functionally, catalyzes the isomerization between 2-isopropylmalate and 3-isopropylmalate, via the formation of 2-isopropylmaleate. The chain is 3-isopropylmalate dehydratase large subunit from Synechococcus sp. (strain RCC307).